Here is a 159-residue protein sequence, read N- to C-terminus: Ribosomal RNA large subunit methyltransferase H (159 aa).

S-adenosyl-L-methionine-binding positions include Leu-76, Gly-108, and 127–132 (FSKMTF).

The protein belongs to the RNA methyltransferase RlmH family. As to quaternary structure, homodimer.

The protein localises to the cytoplasm. The catalysed reaction is pseudouridine(1915) in 23S rRNA + S-adenosyl-L-methionine = N(3)-methylpseudouridine(1915) in 23S rRNA + S-adenosyl-L-homocysteine + H(+). Its function is as follows. Specifically methylates the pseudouridine at position 1915 (m3Psi1915) in 23S rRNA. The sequence is that of Ribosomal RNA large subunit methyltransferase H from Staphylococcus carnosus (strain TM300).